We begin with the raw amino-acid sequence, 496 residues long: Probable cytosol aminopeptidase (496 aa).

Residues Lys258 and Asp263 each contribute to the Mn(2+) site. The active site involves Lys270. 3 residues coordinate Mn(2+): Asp281, Asp340, and Glu342. Arg344 is an active-site residue.

Belongs to the peptidase M17 family. Requires Mn(2+) as cofactor.

The protein localises to the cytoplasm. It carries out the reaction Release of an N-terminal amino acid, Xaa-|-Yaa-, in which Xaa is preferably Leu, but may be other amino acids including Pro although not Arg or Lys, and Yaa may be Pro. Amino acid amides and methyl esters are also readily hydrolyzed, but rates on arylamides are exceedingly low.. It catalyses the reaction Release of an N-terminal amino acid, preferentially leucine, but not glutamic or aspartic acids.. Presumably involved in the processing and regular turnover of intracellular proteins. Catalyzes the removal of unsubstituted N-terminal amino acids from various peptides. In Helicobacter pylori (strain HPAG1), this protein is Probable cytosol aminopeptidase.